The sequence spans 304 residues: Acetylglutamate kinase (304 aa).

Substrate-binding positions include 75 to 76 (GG), R97, and N196.

It belongs to the acetylglutamate kinase family. ArgB subfamily.

It is found in the cytoplasm. The enzyme catalyses N-acetyl-L-glutamate + ATP = N-acetyl-L-glutamyl 5-phosphate + ADP. Its pathway is amino-acid biosynthesis; L-arginine biosynthesis; N(2)-acetyl-L-ornithine from L-glutamate: step 2/4. Catalyzes the ATP-dependent phosphorylation of N-acetyl-L-glutamate. This Corynebacterium urealyticum (strain ATCC 43042 / DSM 7109) protein is Acetylglutamate kinase.